The primary structure comprises 503 residues: Cytochrome P450 71B6 (503 aa).

The helical transmembrane segment at 10–30 (TELLPWLLLLLIPPLLIFFLL) threads the bilayer. Position 446 (cysteine 446) interacts with heme.

This sequence belongs to the cytochrome P450 family. Requires heme as cofactor.

The protein localises to the membrane. This chain is Cytochrome P450 71B6 (CYP71B6), found in Arabidopsis thaliana (Mouse-ear cress).